The following is an 880-amino-acid chain: DNA mismatch repair protein MutS (880 aa).

An ATP-binding site is contributed by 631–638 (GPNMAGKS). The interval 835 to 860 (RAAPPPPAPAAPKTSPVEERLREIQP) is disordered. Basic and acidic residues predominate over residues 850-860 (PVEERLREIQP).

Belongs to the DNA mismatch repair MutS family.

In terms of biological role, this protein is involved in the repair of mismatches in DNA. It is possible that it carries out the mismatch recognition step. This protein has a weak ATPase activity. The protein is DNA mismatch repair protein MutS of Cereibacter sphaeroides (strain ATCC 17029 / ATH 2.4.9) (Rhodobacter sphaeroides).